Here is a 289-residue protein sequence, read N- to C-terminus: Shikimate kinase (289 aa).

ATP is bound at residue 84-94 (PVASGLSSSSA).

Belongs to the GHMP kinase family. Archaeal shikimate kinase subfamily.

It localises to the cytoplasm. The catalysed reaction is shikimate + ATP = 3-phosphoshikimate + ADP + H(+). It participates in metabolic intermediate biosynthesis; chorismate biosynthesis; chorismate from D-erythrose 4-phosphate and phosphoenolpyruvate: step 5/7. The sequence is that of Shikimate kinase (aroK) from Methanothermobacter thermautotrophicus (strain ATCC 29096 / DSM 1053 / JCM 10044 / NBRC 100330 / Delta H) (Methanobacterium thermoautotrophicum).